We begin with the raw amino-acid sequence, 343 residues long: Heat-inducible transcription repressor HrcA (343 aa).

This sequence belongs to the HrcA family.

Functionally, negative regulator of class I heat shock genes (grpE-dnaK-dnaJ and groELS operons). Prevents heat-shock induction of these operons. This is Heat-inducible transcription repressor HrcA from Mycolicibacterium gilvum (strain PYR-GCK) (Mycobacterium gilvum (strain PYR-GCK)).